Here is a 111-residue protein sequence, read N- to C-terminus: Large ribosomal subunit protein uL22 (111 aa).

The protein belongs to the universal ribosomal protein uL22 family. As to quaternary structure, part of the 50S ribosomal subunit.

Its function is as follows. This protein binds specifically to 23S rRNA; its binding is stimulated by other ribosomal proteins, e.g. L4, L17, and L20. It is important during the early stages of 50S assembly. It makes multiple contacts with different domains of the 23S rRNA in the assembled 50S subunit and ribosome. In terms of biological role, the globular domain of the protein is located near the polypeptide exit tunnel on the outside of the subunit, while an extended beta-hairpin is found that lines the wall of the exit tunnel in the center of the 70S ribosome. In Pelobacter propionicus (strain DSM 2379 / NBRC 103807 / OttBd1), this protein is Large ribosomal subunit protein uL22.